A 281-amino-acid polypeptide reads, in one-letter code: 18S rRNA (guanine-N(7))-methyltransferase (281 aa).

Positions 212 to 231 (LPKGLTESQDADQASESMFT) are enriched in polar residues. Positions 212 to 281 (LPKGLTESQD…YTGRKRKPRF (70 aa)) are disordered. A compositionally biased stretch (basic and acidic residues) spans 242-256 (RDLVKKSREWVLEKK).

It belongs to the class I-like SAM-binding methyltransferase superfamily. BUD23/WBSCR22 family. In terms of assembly, heterodimer with TRMT112; this heterodimerization is necessary for the metabolic stability and activity of the catalytic subunit BUD23. Interacts with GRIP1. In terms of processing, may be ubiquitinated and targeted to degradation in response to pro-inflammatory cytokine signaling.

The protein resides in the nucleus. Its subcellular location is the nucleoplasm. It localises to the cytoplasm. It is found in the perinuclear region. It carries out the reaction a guanosine in 18S rRNA + S-adenosyl-L-methionine = an N(7)-methylguanosine in 18S rRNA + S-adenosyl-L-homocysteine. S-adenosyl-L-methionine-dependent methyltransferase that specifically methylates the N(7) position of a guanine in 18S rRNA. Requires the methyltransferase adapter protein TRM112 for full rRNA methyltransferase activity. Involved in the pre-rRNA processing steps leading to small-subunit rRNA production independently of its RNA-modifying catalytic activity. Important for biogenesis end export of the 40S ribosomal subunit independent on its methyltransferase activity. Locus-specific steroid receptor coactivator. Potentiates transactivation by glucocorticoid (NR3C1), mineralocorticoid (NR3C2), androgen (AR) and progesterone (PGR) receptors. Required for the maintenance of open chromatin at the TSC22D3/GILZ locus to facilitate NR3C1 loading on the response elements. Required for maintenance of dimethylation on histone H3 'Lys-79' (H3K79me2), although direct histone methyltransferase activity is not observed in vitro. The sequence is that of 18S rRNA (guanine-N(7))-methyltransferase from Mus musculus (Mouse).